A 332-amino-acid chain; its full sequence is Processive diacylglycerol alpha-glucosyltransferase (332 aa).

The protein belongs to the glycosyltransferase group 1 family. Glycosyltransferase 4 subfamily. Mg(2+) is required as a cofactor.

The protein localises to the cell membrane. It catalyses the reaction a 1,2-diacyl-sn-glycerol + UDP-alpha-D-glucose = a 1,2-diacyl-3-O-(alpha-D-glucopyranosyl)-sn-glycerol + UDP + H(+). It carries out the reaction a 1,2-diacyl-3-O-(alpha-D-glucopyranosyl)-sn-glycerol + UDP-alpha-D-glucose = a 1,2-diacyl-3-O-[alpha-D-glucosyl-(1-&gt; 2)-alpha-D-glucosyl]-sn-glycerol + UDP + H(+). It functions in the pathway glycolipid metabolism; diglucosyl-diacylglycerol biosynthesis. With respect to regulation, activated by the negatively charged lipids phosphatidylglycerol (PG), cardiolipin (CL), nonbilayer-prone 1,3-DAG, 1,2-dioleoylphosphatidylglycerol (DOPG) and 1,2-dioleoylphosphatidylserine (DOPS). Inhibited by 1,2-diacyl-3-O-(alpha-D-galactopyranosyl)-sn-glycerol, 1,2-diacyl-3-O-[6-O-acyl(alpha-D-glucopyranosyl)]-sn-glycerol and 1,2-diacyl-3-O-[alpha-D-glucopyranosyl-(1-&gt;2)-O-(6-O-acyl-alpha-D-glucopyranosyl)]-sn-glycerol. Processive glucosyltransferase involved in the biosynthesis of both the non-bilayer-prone alpha-monoglucosyldiacylglycerol and the bilayer-forming membrane lipid alpha-diglucosyldiacylglycerol. These are major components for maintaining the anionic lipid surface charge density, for balancing the bilayer to non-bilayer phase equilibria and for keeping a constant lipid bilayer spontaneous curvature (curvature packing stress). Catalyzes the transfer of a glucosyl residue from UDP-Glc to diacylglycerol (DAG) acceptor to form the corresponding alpha-glucosyl-DAG (1,2-diacyl-3-O-(alpha-D-glucopyranosyl)-sn-glycerol), which then acts as acceptor to give alpha-diglucosyl-DAG product (3-O-(alpha-D-glucopyranosyl-alpha-(1-&gt;2)-D-glucopyranosyl)-1,2-diacyl-sn-glycerol). It can only use UDP-Glc as sugar donor. The protein is Processive diacylglycerol alpha-glucosyltransferase (dgs) of Acholeplasma laidlawii.